We begin with the raw amino-acid sequence, 129 residues long: Trefoil factor 2 (129 aa).

Residues 1-23 form the signal peptide; sequence MGRRDAQLLAALLVLGLCALAGS. 2 P-type domains span residues 29-73 and 79-122; these read CQCS…FHPL and DQCV…FFPK. Disulfide bonds link Cys29–Cys127, Cys31–Cys58, Cys42–Cys57, Cys52–Cys69, Cys81–Cys107, Cys91–Cys106, and Cys101–Cys118.

As to expression, stomach.

The protein resides in the secreted. Functionally, inhibits gastrointestinal motility and gastric acid secretion. Could function as a structural component of gastric mucus, possibly by stabilizing glycoproteins in the mucus gel through interactions with carbohydrate side chains. This is Trefoil factor 2 (TFF2) from Homo sapiens (Human).